Consider the following 257-residue polypeptide: Probable pectate lyase G (257 aa).

Positions 1-24 (MPVLSKLLPTLTLTLPLLAGPCLA) are cleaved as a signal peptide.

The protein belongs to the polysaccharide lyase 3 family. Ca(2+) is required as a cofactor.

It localises to the secreted. The catalysed reaction is Eliminative cleavage of (1-&gt;4)-alpha-D-galacturonan to give oligosaccharides with 4-deoxy-alpha-D-galact-4-enuronosyl groups at their non-reducing ends.. In terms of biological role, pectinolytic enzyme consist of four classes of enzymes: pectin lyase, polygalacturonase, pectin methylesterase and rhamnogalacturonase. Among pectinolytic enzymes, pectin lyase is the most important in depolymerization of pectin, since it cleaves internal glycosidic bonds of highly methylated pectins. Favors pectate, the anion, over pectin, the methyl ester. The protein is Probable pectate lyase G (plyG) of Emericella nidulans (strain FGSC A4 / ATCC 38163 / CBS 112.46 / NRRL 194 / M139) (Aspergillus nidulans).